The primary structure comprises 259 residues: UPF0246 protein VSAL_I2547 (259 aa).

This sequence belongs to the UPF0246 family.

The sequence is that of UPF0246 protein VSAL_I2547 from Aliivibrio salmonicida (strain LFI1238) (Vibrio salmonicida (strain LFI1238)).